The primary structure comprises 559 residues: MASAGGEVVVVDPAAAAVAPDVEHHAPAPRLTPAGSGGRLMAELLGVFNGLTERMGDDVATSSSWTLLFRALKLALPALRDAAGGRSLARALIVAASLADLQMDAEVISAGIVRQAMDAGAVAMADAEAQLGPGAAALLLESLDVKNAPSRVDVADEEAASAVRNRILSGYDVRAVILELAIRLDAMKHLDGVPKHQQRTTSLEVLKVFAPLAHAVGAGALSKELEDLSFWRLYPQAYAQVDQWLSGQEDDCKRVLATCKDDLLQALAADDELRHTVAGFDVKGRYKSRFSAMKKLVKDGRRPEDVHDILGMRVILDHRAGAGDGHRACIRTHEVIKGMWKDVPARTKDYIARPKGDGYRSLHIAVDMSEPGPEGKKRPLMEVQIRTKEMNDAAVFGHALYKGCLADPEEAKRLKDIMLAAAEVAAQHLRDEPATGDQTGVPAAAAAAASAGNIERAFRLLDKNGDGRISMEELTELMEDLGAGGKDAEELMRLLDDNNDGSLSSDEFALFQKRVELKAKLEDKDDEYKEILRQKLQKVDDTGLIHVYRKNLSDKLVSG.

Residues Met1–Gly37 constitute a chloroplast transit peptide. In terms of domain architecture, HD spans Ser87–Met187. 2 EF-hand domains span residues Ala449–Gly484 and Lys486–Lys518. Asp462, Asn464, Asp466, Arg468, Glu473, Asp496, Asn498, Asp500, Ser502, and Glu507 together coordinate Ca(2+).

This sequence belongs to the RelA/SpoT family. Expressed in shoots.

It localises to the plastid. The protein localises to the chloroplast. It carries out the reaction GTP + ATP = guanosine 3'-diphosphate 5'-triphosphate + AMP. Its activity is regulated as follows. Activated by calcium. Functionally, possesses calcium-dependent ppGpp (guanosine 3'-diphosphate 5'-diphosphate) synthetase activity in vitro and is able to functionally complement E.coli relA mutants. May be involved in a rapid plant ppGpp-mediated response to pathogens and other stresses. This Oryza sativa subsp. japonica (Rice) protein is GTP diphosphokinase CRSH2, chloroplastic.